The following is a 581-amino-acid chain: Chaotic nuclear migration protein 67 (581 aa).

Serine 17, serine 20, serine 72, serine 85, and serine 89 each carry phosphoserine. The tract at residues 86–150 is disordered; it reads YQESPGLQER…PTDEHTSPDI (65 aa). Residues 94 to 114 show a composition bias toward basic and acidic residues; sequence ERPKNEKDKSPIGTDVHKKDV. The residue at position 151 (serine 151) is a Phosphoserine. Coiled coils occupy residues 179 to 252, 306 to 363, and 373 to 451; these read LGYQ…DTIQ, FLCA…LSKQ, and KLTI…NTSE.

In terms of assembly, interacts directly with ADY3 and YOR129C. Interacts with ADY4. Probable component of a SPB complex composed of ADY3, SSP1, DON1, MPC54, SPO21/MPC70, NUD1 and CNM67. Post-translationally, phosphorylated in its N-terminal part.

It localises to the cytoplasm. It is found in the cytoskeleton. The protein resides in the microtubule organizing center. The protein localises to the spindle pole body. Involved in the pathway that organizes the shaping and sizing of the prospore membrane (PSM) during sporulation. Required for the proper formation of the spindle pole body (SPB) outer plaque. May connect the outer plaque to the central plaque embedded in the nuclear envelope. In Saccharomyces cerevisiae (strain ATCC 204508 / S288c) (Baker's yeast), this protein is Chaotic nuclear migration protein 67 (CNM67).